The sequence spans 246 residues: Cell division protein ZapD (246 aa).

It belongs to the ZapD family. Interacts with FtsZ.

Its subcellular location is the cytoplasm. In terms of biological role, cell division factor that enhances FtsZ-ring assembly. Directly interacts with FtsZ and promotes bundling of FtsZ protofilaments, with a reduction in FtsZ GTPase activity. The sequence is that of Cell division protein ZapD from Vibrio atlanticus (strain LGP32) (Vibrio splendidus (strain Mel32)).